A 1700-amino-acid polypeptide reads, in one-letter code: Ras-responsive element-binding protein 1 (1700 aa).

Residues 31–63 (TENGGSPQGIKSPMKPPGPNRIGRRNQETKEEK) are disordered. S36 and S42 each carry phosphoserine. 3 C2H2-type zinc fingers span residues 66–88 (YNCP…IRQH), 97–119 (HACS…MLVH), and 125–147 (YKCT…MKIH). Positions 146-195 (IHEKDTNSTTAAAPPSPLKRRRLSSKRKLSHDAESEDPGPAKKMVEDGQS) are disordered. S161 is subject to Phosphoserine. A compositionally biased stretch (basic residues) spans 163–174 (LKRRRLSSKRKL). Phosphoserine is present on residues S175 and S180. Over residues 184-195 (GPAKKMVEDGQS) the composition is skewed to basic and acidic residues. Residues 206–228 (FHCPVCFKEFVCKYELETHMETH) form a C2H2-type 4 zinc finger. S229 is modified (phosphoserine). 2 C2H2-type zinc fingers span residues 233 to 256 (LRCD…ALVH) and 314 to 336 (FVCD…RQSH). Glycyl lysine isopeptide (Lys-Gly) (interchain with G-Cter in SUMO2) cross-links involve residues K433, K500, K549, K564, K591, and K611. Residue K613 forms a Glycyl lysine isopeptide (Lys-Gly) (interchain with G-Cter in SUMO1); alternate linkage. K613 participates in a covalent cross-link: Glycyl lysine isopeptide (Lys-Gly) (interchain with G-Cter in SUMO2); alternate. Residue K622 forms a Glycyl lysine isopeptide (Lys-Gly) (interchain with G-Cter in SUMO2) linkage. 5 consecutive C2H2-type zinc fingers follow at residues 641 to 663 (YPCR…VRSH), 669 to 691 (YQCN…IRTH), 697 to 720 (YICK…RKKH), 751 to 782 (TVCR…GGCH), and 788 to 813 (FECK…QHLH). Residues K855, K883, and K911 each participate in a glycyl lysine isopeptide (Lys-Gly) (interchain with G-Cter in SUMO2) cross-link. 2 disordered regions span residues 939 to 991 (IPKS…SLET) and 1092 to 1177 (ADPG…AVDL). A compositionally biased stretch (basic and acidic residues) spans 944–961 (KKGDKDTVVPSDAKKPEP). S970 bears the Phosphoserine mark. Over residues 1097-1111 (SITSSNTVATDSPGS) the composition is skewed to polar residues. Phosphoserine is present on residues S1125, S1137, and S1138. Residues 1137-1146 (SSPEEALPTE) show a composition bias toward low complexity. The span at 1155–1165 (SRKRGRKRGLR) shows a compositional bias: basic residues. S1172, S1179, S1180, and S1230 each carry phosphoserine. Disordered stretches follow at residues 1195–1235 (TNKF…AEDR), 1273–1368 (HTDS…QSLD), 1383–1521 (SEAG…RKKV), and 1564–1670 (VRHQ…SPAA). A C2H2-type 12 zinc finger spans residues 1251–1273 (INCPHCPRVFPWASSLQRHMLTH). The span at 1273-1285 (HTDSQSDTDTLTT) shows a compositional bias: low complexity. Residues 1327 to 1346 (SEEEEEKETEENPEPEEECR) are compositionally biased toward acidic residues. The segment at 1400–1422 (HACDTCGKNFKFLGTLSRHKKAH) adopts a C2H2-type 13 zinc-finger fold. Residues S1450 and S1452 each carry the phosphoserine modification. The segment covering 1492–1507 (TAEKRGDGDKRPKTDS) has biased composition (basic and acidic residues). C2H2-type zinc fingers lie at residues 1520–1542 (KVCS…MRSH) and 1548–1570 (YKCQ…QRIH). A compositionally biased stretch (basic residues) spans 1564–1580 (VRHQRIHQKARHSKHHG). Residues S1593 and S1606 each carry the phosphoserine modification. A compositionally biased stretch (low complexity) spans 1645 to 1660 (AEQAAEPSAPKEQASP). At S1667 the chain carries Phosphoserine.

It belongs to the krueppel C2H2-type zinc-finger protein family. In terms of assembly, interacts with NEUROD1. Interacts with AR. As to expression, expressed in splenic B-cells.

It is found in the nucleus speckle. Its function is as follows. Transcription factor that binds specifically to the RAS-responsive elements (RRE) of gene promoters. Represses the angiotensinogen gene. Negatively regulates the transcriptional activity of AR. Potentiates the transcriptional activity of NEUROD1. Binds specifically to the allelic variant of the CDKN2A promoter present in Balb/c mice, which leads to a down-regulation of CDKN2A expression in this strain, and, as a consequence, to an elevated susceptibility to pristane-induced tumors. Promotes brown adipocyte differentiation. May be involved in Ras/Raf-mediated cell differentiation by enhancing calcitonin expression. This chain is Ras-responsive element-binding protein 1 (Rreb1), found in Mus musculus (Mouse).